We begin with the raw amino-acid sequence, 69 residues long: Dodecin (69 aa).

Lys-3 to Tyr-5 serves as a coordination point for FMN. CoA-binding positions include Lys-6, Arg-28, and Thr-32–Arg-34. The FMN site is built by Asp-37, Trp-38, Arg-45, Gln-57, and Arg-65. Arg-65–Glu-67 serves as a coordination point for CoA.

Belongs to the dodecin family. In terms of assembly, homododecamer; four homotrimers assemble to form a dodecameric hollow sphere with an outer diameter of about 60 Angstroms. Flavin dimers are bound between subunits with a stoichiometry of 6 flavin dimers per dodecamer. Besides, trimeric coenzyme A molecules can be bound between subunits. A dodecamer can bind simultaneously 12 flavin and 12 coenzyme A molecules.

In terms of biological role, may function as storage protein that sequesters various flavins and other cofactors, thereby protecting the cell against undesirable reactions mediated by the free cofactors. Binds and sequesters FMN, FAD, lumiflavin and lumichrome, and can also bind coenzyme A. This chain is Dodecin, found in Thermus thermophilus (strain ATCC 27634 / DSM 579 / HB8).